The chain runs to 552 residues: Steroid transmembrane transporter SLC22A24 (552 aa).

12 helical membrane passes run 16–36 (FQILQIAFFFVTSMITYTHIL), 144–164 (LKSVVQTLFMSGSLLGGLMFG), 175–197 (IYTWCLLQTAIADTCAIFAPTFV), 201–220 (IFRFLAGLTTINIMTNAFIL), 232–252 (IGITLILCSYSIGQMLLGGLA), 255–275 (IRDWYTLHLTVSIPLFVLSLL), 349–369 (IICFLSFIRLGASVPFMGLIL), 371–391 (LQDLGSSIFLFQVLFGAITFI), 407–427 (INQSLFFFLVGLCILVNTFLS), 435–455 (VVLATLGIGTVSAANATFFVH), 474–494 (VFSRMGSVLAPLLMTLVVYSP), and 496–516 (LPWVMYGVFPILAGLIVFCLP).

Belongs to the major facilitator (TC 2.A.1) superfamily. Organic cation transporter (TC 2.A.1.19) family.

Its subcellular location is the cell membrane. The catalysed reaction is estrone 3-sulfate(out) + glutarate(in) = estrone 3-sulfate(in) + glutarate(out). The enzyme catalyses 17beta-estradiol 17-O-(beta-D-glucuronate)(out) + glutarate(in) = 17beta-estradiol 17-O-(beta-D-glucuronate)(in) + glutarate(out). It catalyses the reaction taurocholate(out) + glutarate(in) = taurocholate(in) + glutarate(out). It carries out the reaction 5alpha-androstane-3alpha,17beta-diol 3-O-(beta-D-glucuronate)(out) + glutarate(in) = 5alpha-androstane-3alpha,17beta-diol 3-O-(beta-D-glucuronate)(in) + glutarate(out). The catalysed reaction is glycocholate(out) + glutarate(in) = glycocholate(in) + glutarate(out). The enzyme catalyses dehydroepiandrosterone 3-sulfate(out) + glutarate(in) = dehydroepiandrosterone 3-sulfate(in) + glutarate(out). It catalyses the reaction glutarate(in) + succinate(out) = glutarate(out) + succinate(in). Its function is as follows. Renal transmembrane organic anion/dicarboxylate exchanger that participates in the reabsorption of conjugated steroids, as well as bile acids, driven by an outward gradient of dicarboxylates such as glutarate or succinate. Transports androstanediol glucuronide (5alpha-androstane-3alpha,17beta-diol 3-O-(beta-D-glucuronate)), estrone 3-sulfate, and estradiol-17-glucuronide (17beta-estradiol 17-O-(beta-D-glucuronate)), and taurocholate. The sequence is that of Steroid transmembrane transporter SLC22A24 from Oryctolagus cuniculus (Rabbit).